Here is a 142-residue protein sequence, read N- to C-terminus: COA8 family protein CBG23705, mitochondrial (142 aa).

The protein belongs to the COA8 family.

It is found in the mitochondrion inner membrane. Functionally, may be required for cytochrome c complex (COX) assembly and function, COX being the terminal component of the mitochondrial respiratory chain. The sequence is that of COA8 family protein CBG23705, mitochondrial from Caenorhabditis briggsae.